Reading from the N-terminus, the 483-residue chain is BTB/POZ domain and ankyrin repeat-containing protein COCH (483 aa).

The BTB domain occupies 25–105; the sequence is SDVVFSVEGR…LYSGQVSIVP (81 aa). The C2HC NPR-type zinc finger occupies 111 to 125; that stretch reads RPNCGDRGCWHTHCT. 4 residues coordinate Zn(2+): cysteine 114, cysteine 119, histidine 121, and cysteine 124. ANK repeat units follow at residues 249–278, 279–308, 313–342, and 346–380; these read QKIR…LNLD, EALA…DVNF, TGKT…DPNV, and DGVT…KLRL. 2 disordered regions span residues 395–435 and 450–483; these read EEGN…NSNM and MSTS…SHDY. The segment covering 398-414 has biased composition (low complexity); the sequence is NNNNNANNNNTGSSATN. The span at 456 to 465 shows a compositional bias: basic and acidic residues; sequence DSGDDDHNSN.

The protein belongs to the plant 'ANKYRIN-BTB/POZ' family. 'NOOT-BOP-COCH-like' (NBCL) subfamily. As to quaternary structure, homodimer.

The protein resides in the nucleus. It localises to the cytoplasm. Its subcellular location is the cell membrane. It functions in the pathway protein modification; protein ubiquitination. May act as a substrate-specific adapter of an E3 ubiquitin-protein ligase complex (CUL3-RBX1-BTB) which mediates the ubiquitination and subsequent proteasomal degradation of target proteins. Transcriptional co-regulator involved in the promotion of leaf and floral meristem fate and determinacy. Promotes normal stipule growth and development. Required for the abscission of senescent organs, probably by regulating the cell wall disorganization in abscission zones (AZs, e.g. pulvini at the base of leaves). Down-regulates UNI expression in primordia of leaves and secondary inflorescences, and thereby controls their sizes and/or structures. Involved in the coordination of the symbiotic nodule developmental program. Promotes the formation of root nodules by interacting directly with APP1 to modulate the expression of the nuclear transcription factor Y subunit (NF-YA1), a key nodulin. Necessary for the robust maintenance of nodule identity throughout the nodule developmental program. The polypeptide is BTB/POZ domain and ankyrin repeat-containing protein COCH (Pisum sativum (Garden pea)).